Consider the following 308-residue polypeptide: Acetylglutamate kinase (308 aa).

Residues 73-74, Arg95, and Asn194 each bind substrate; that span reads GG.

Belongs to the acetylglutamate kinase family. ArgB subfamily.

Its subcellular location is the cytoplasm. The enzyme catalyses N-acetyl-L-glutamate + ATP = N-acetyl-L-glutamyl 5-phosphate + ADP. The protein operates within amino-acid biosynthesis; L-arginine biosynthesis; N(2)-acetyl-L-ornithine from L-glutamate: step 2/4. Its function is as follows. Catalyzes the ATP-dependent phosphorylation of N-acetyl-L-glutamate. This chain is Acetylglutamate kinase, found in Rhodococcus jostii (strain RHA1).